A 360-amino-acid chain; its full sequence is Cannabinoid receptor 2 (360 aa).

Residues 1–33 lie on the Extracellular side of the membrane; the sequence is MAGCRELELTNGSNGGLEFNPMKEYMILSDAQQ. N-linked (GlcNAc...) asparagine glycosylation occurs at N11. The helical transmembrane segment at 34-59 threads the bilayer; it reads IAVAVLCTLMGLLSALENVAVLYLIL. The Cytoplasmic segment spans residues 60–71; that stretch reads SSQRLRRKPSYL. A helical membrane pass occupies residues 72 to 92; the sequence is FIGSLAGADFLASVIFACNFV. Over 93–104 the chain is Extracellular; that stretch reads IFHVFHGVDSRN. The chain crosses the membrane as a helical span at residues 105–129; it reads IFLLKIGSVTMTFTASVGSLLLTAV. At 130 to 149 the chain is on the cytoplasmic side; that stretch reads DRYLCLCYPPTYKALVTRGR. Residues 150 to 172 traverse the membrane as a helical segment; sequence ALVALGVMWVLSALISYLPLMGW. The Extracellular portion of the chain corresponds to 173-188; it reads TCCPSPCSELFPLIPN. Residues 189 to 214 form a helical membrane-spanning segment; sequence DYLLGWLLFIAILFSGIIYTYGYVLW. The Cytoplasmic portion of the chain corresponds to 215 to 246; sequence KAHQHVASLAEHQDRQVPGIARMRLDVRLAKT. Residues 247 to 267 form a helical membrane-spanning segment; that stretch reads LGLVMAVLLICWFPALALMGH. The Extracellular segment spans residues 268–279; that stretch reads SLVTTLSDKVKE. A helical transmembrane segment spans residues 280-301; that stretch reads AFAFCSMLCLVNSMINPIIYAL. Residues 302–360 lie on the Cytoplasmic side of the membrane; sequence RSGEIRSAAQHCLTGWKKYLQGLGSEGKEEAPKSSVTETEAEVKTTTGPGSRTPGCSNC. Positions 327-360 are disordered; it reads EGKEEAPKSSVTETEAEVKTTTGPGSRTPGCSNC. A phosphoserine mark is found at S335 and S336. T338 bears the Phosphothreonine mark. Positions 349 to 360 are enriched in polar residues; that stretch reads GPGSRTPGCSNC. The residue at position 352 (S352) is a Phosphoserine.

The protein belongs to the G-protein coupled receptor 1 family. Post-translationally, constitutively phosphorylated on Ser-352; phosphorylation increases cell internalization and desensitizes the receptor. As to expression, expressed in spleen and brain by neurons and glial cells (at protein level). Expressed in lung, testis and thymus but not in heart, liver or kidney. Expressed in cerebellum, cortex and brainstem.

It is found in the cell membrane. It localises to the cell projection. The protein resides in the dendrite. Its subcellular location is the perikaryon. In terms of biological role, heterotrimeric G protein-coupled receptor for endocannabinoid 2-arachidonoylglycerol mediating inhibition of adenylate cyclase. May function in inflammatory response, nociceptive transmission and bone homeostasis. This is Cannabinoid receptor 2 (Cnr2) from Rattus norvegicus (Rat).